The primary structure comprises 367 residues: AA9 family lytic polysaccharide monooxygenase A (367 aa).

A signal peptide spans 1-20 (MKSSTFGMLALAAAAKLVSA). His-21 contacts Cu(2+). The tract at residues 37-56 (GNSESGYIRSPPSNSPITDV) is disordered. The cysteines at positions 63 and 183 are disulfide-linked. His-102 provides a ligand contact to Cu(2+). His-169 provides a ligand contact to O2. Tyr-180 contributes to the Cu(2+) binding site. The disordered stretch occupies residues 234–287 (GASGSSSSPSASASASAPAATSAAPAPSSFTTIAKQPATSSTEAPSTENTSTTS). Composition is skewed to low complexity over residues 235–262 (ASGSSSSPSASASASAPAATSAAPAPSS) and 270–287 (PATSSTEAPSTENTSTTS). N-linked (GlcNAc...) asparagine glycosylation is present at Asn-282. Residues 329 to 365 (GAVKEWYQCGGLNYKGSTQCEEGLTCKKWNPYYYQCI) form the CBM1 domain.

The protein belongs to the polysaccharide monooxygenase AA9 family. Cu(2+) serves as cofactor.

Its subcellular location is the secreted. It carries out the reaction [(1-&gt;4)-beta-D-glucosyl]n+m + reduced acceptor + O2 = 4-dehydro-beta-D-glucosyl-[(1-&gt;4)-beta-D-glucosyl]n-1 + [(1-&gt;4)-beta-D-glucosyl]m + acceptor + H2O.. Its function is as follows. Lytic polysaccharide monooxygenase (LPMO) that depolymerizes crystalline and amorphous polysaccharides via the oxidation of scissile alpha- or beta-(1-4)-glycosidic bonds, yielding C4 oxidation products. Catalysis by LPMOs requires the reduction of the active-site copper from Cu(II) to Cu(I) by a reducing agent and H(2)O(2) or O(2) as a cosubstrate. Active on cellulose and cello-oligosaccharides, as well as plant cell wall-derived hemicellulosic polysaccharides. Also active on cello-oligosaccharides such as cellohexaose, cellopentaose or cellotetraose. The chain is AA9 family lytic polysaccharide monooxygenase A from Aspergillus oryzae (strain ATCC 42149 / RIB 40) (Yellow koji mold).